Consider the following 154-residue polypeptide: Protein X (154 aa).

The mitochondrial targeting sequence stretch occupies residues 68–117 (PCALRFTSARRMETTVNAPGNLPKVLHKRTLGLSVMSTTDLEAYFKDCVF).

Belongs to the orthohepadnavirus protein X family. As to quaternary structure, may form homodimer. May interact with host CEBPA, CFLAR, CREB1, DDB1, E4F1, HBXIP, HSPD1/HSP60, NFKBIA, POLR2E and SMAD4. Interacts with host SMC5-SMC6 complex and induces its degradation. Interacts with host TRPC4AP; leading to prevent ubiquitination of TRPC4AP. Interacts with host PLSCR1; this interaction promotes ubiquitination and degradation of HBx and impairs HBx-mediated cell proliferation. In terms of processing, a fraction may be phosphorylated in insect cells and HepG2 cells, a human hepatoblastoma cell line. Phosphorylated in vitro by host protein kinase C or mitogen-activated protein kinase. N-acetylated in insect cells.

Its subcellular location is the host cytoplasm. The protein resides in the host nucleus. The protein localises to the host mitochondrion. In terms of biological role, multifunctional protein that plays a role in silencing host antiviral defenses and promoting viral transcription. Does not seem to be essential for HBV infection. May be directly involved in development of cirrhosis and liver cancer (hepatocellular carcinoma). Most of cytosolic activities involve modulation of cytosolic calcium. The effect on apoptosis is controversial depending on the cell types in which the studies have been conducted. May induce apoptosis by localizing in mitochondria and causing loss of mitochondrial membrane potential. May also modulate apoptosis by binding host CFLAR, a key regulator of the death-inducing signaling complex (DISC). Promotes viral transcription by using the host E3 ubiquitin ligase DDB1 to target the SMC5-SMC6 complex to proteasomal degradation. This host complex would otherwise bind to viral episomal DNA, and prevents its transcription. Moderately stimulates transcription of many different viral and cellular transcription elements. Promoters and enhancers stimulated by HBx contain DNA binding sites for NF-kappa-B, AP-1, AP-2, c-EBP, ATF/CREB, or the calcium-activated factor NF-AT. This Hepatitis B virus genotype B2 (isolate Vietnam/16091/1992) (HBV-B) protein is Protein X.